The following is a 224-amino-acid chain: ATP phosphoribosyltransferase (224 aa).

This sequence belongs to the ATP phosphoribosyltransferase family. Short subfamily. In terms of assembly, heteromultimer composed of HisG and HisZ subunits.

It is found in the cytoplasm. The catalysed reaction is 1-(5-phospho-beta-D-ribosyl)-ATP + diphosphate = 5-phospho-alpha-D-ribose 1-diphosphate + ATP. Its pathway is amino-acid biosynthesis; L-histidine biosynthesis; L-histidine from 5-phospho-alpha-D-ribose 1-diphosphate: step 1/9. Its function is as follows. Catalyzes the condensation of ATP and 5-phosphoribose 1-diphosphate to form N'-(5'-phosphoribosyl)-ATP (PR-ATP). Has a crucial role in the pathway because the rate of histidine biosynthesis seems to be controlled primarily by regulation of HisG enzymatic activity. The polypeptide is ATP phosphoribosyltransferase (Cupriavidus pinatubonensis (strain JMP 134 / LMG 1197) (Cupriavidus necator (strain JMP 134))).